The following is a 299-amino-acid chain: SET domain-containing protein 9 (299 aa).

One can recognise an SET domain in the interval 122–295; the sequence is FSVAQATSSL…QGEELFSNYY (174 aa). Tyr294 contributes to the S-adenosyl-L-methionine binding site.

This sequence belongs to the class V-like SAM-binding methyltransferase superfamily.

The protein is SET domain-containing protein 9 (SETD9) of Homo sapiens (Human).